Consider the following 599-residue polypeptide: Elongation factor 4 (599 aa).

Residues Lys-2 to Glu-184 enclose the tr-type G domain. GTP contacts are provided by residues Asp-14–Thr-19 and Asn-131–Asp-134.

It belongs to the TRAFAC class translation factor GTPase superfamily. Classic translation factor GTPase family. LepA subfamily.

Its subcellular location is the cell inner membrane. The enzyme catalyses GTP + H2O = GDP + phosphate + H(+). In terms of biological role, required for accurate and efficient protein synthesis under certain stress conditions. May act as a fidelity factor of the translation reaction, by catalyzing a one-codon backward translocation of tRNAs on improperly translocated ribosomes. Back-translocation proceeds from a post-translocation (POST) complex to a pre-translocation (PRE) complex, thus giving elongation factor G a second chance to translocate the tRNAs correctly. Binds to ribosomes in a GTP-dependent manner. The protein is Elongation factor 4 of Yersinia pestis bv. Antiqua (strain Antiqua).